Here is a 190-residue protein sequence, read N- to C-terminus: dCTP deaminase (190 aa).

DCTP is bound by residues 111-116 (KSTYAR), 135-137 (TLE), Gln156, Tyr172, and Gln182. Glu137 serves as the catalytic Proton donor/acceptor.

It belongs to the dCTP deaminase family. In terms of assembly, homotrimer.

The catalysed reaction is dCTP + H2O + H(+) = dUTP + NH4(+). It functions in the pathway pyrimidine metabolism; dUMP biosynthesis; dUMP from dCTP (dUTP route): step 1/2. Its function is as follows. Catalyzes the deamination of dCTP to dUTP. The sequence is that of dCTP deaminase from Stenotrophomonas maltophilia (strain K279a).